The following is a 478-amino-acid chain: Growth/differentiation factor 10 (478 aa).

The N-terminal stretch at 1 to 33 is a signal peptide; it reads MARGPARTSLGPGSQQLPLLSLLLLLLLRDADG. A disordered region spans residues 34 to 70; that stretch reads SHTAAARPPPPAAADGLAGDKNPQRSPGDVAAAQSPG. The propeptide occupies 34–368; sequence SHTAAARPPP…EKTMQKARKK (335 aa). Residues Asn118, Asn155, and Asn280 are each glycosylated (N-linked (GlcNAc...) asparagine). The tract at residues 267–345 is disordered; that stretch reads PFQAGDPEPG…GRKDRRKKGQ (79 aa). Positions 291–301 are enriched in polar residues; that stretch reads TQATGPLQNNE. Residues 331 to 343 show a composition bias toward basic residues; that stretch reads LKPRPGRKDRRKK. 3 disulfide bridges follow: Cys376–Cys443, Cys405–Cys475, and Cys409–Cys477. An N-linked (GlcNAc...) asparagine glycan is attached at Asn469.

The protein belongs to the TGF-beta family. In terms of assembly, homodimer or heterodimer. Can form a non-covalent complex of the mature region and the pro-region.

The protein localises to the secreted. In terms of biological role, growth factor involved in osteogenesis and adipogenesis. Plays an inhibitory role in the process of osteoblast differentiation via SMAD2/3 pathway. Plays an inhibitory role in the process of adipogenesis. This chain is Growth/differentiation factor 10 (GDF10), found in Bos taurus (Bovine).